A 379-amino-acid chain; its full sequence is Cytochrome b (379 aa).

Helical transmembrane passes span 33-53 (FGSL…FLAM), 77-98 (WLIR…YLHI), 113-133 (WNIG…GYVL), and 178-198 (FFAF…VHLL). Residues His-83 and His-97 each contribute to the heme b site. 2 residues coordinate heme b: His-182 and His-196. His-201 lines the a ubiquinone pocket. Transmembrane regions (helical) follow at residues 226-246 (TKDF…VLFF), 288-308 (MGGV…PHIQ), 320-340 (ISQF…WIGG), and 347-367 (FIII…AFLP).

Belongs to the cytochrome b family. In terms of assembly, the cytochrome bc1 complex contains 11 subunits: 3 respiratory subunits (MT-CYB, CYC1 and UQCRFS1), 2 core proteins (UQCRC1 and UQCRC2) and 6 low-molecular weight proteins (UQCRH/QCR6, UQCRB/QCR7, UQCRQ/QCR8, UQCR10/QCR9, UQCR11/QCR10 and a cleavage product of UQCRFS1). This cytochrome bc1 complex then forms a dimer. The cofactor is heme b.

It is found in the mitochondrion inner membrane. Component of the ubiquinol-cytochrome c reductase complex (complex III or cytochrome b-c1 complex) that is part of the mitochondrial respiratory chain. The b-c1 complex mediates electron transfer from ubiquinol to cytochrome c. Contributes to the generation of a proton gradient across the mitochondrial membrane that is then used for ATP synthesis. The protein is Cytochrome b (MT-CYB) of Dipodomys ordii (Ord's kangaroo rat).